Consider the following 446-residue polypeptide: NAD(P)H sulfur oxidoreductase (CoA-dependent) (446 aa).

17–18 (AA) contacts FAD. Arg28 contributes to the CoA binding site. Residues 39-40 (EA) and 46-48 (HAP) each bind FAD. CoA contacts are provided by residues 45–49 (SHAPC), 66–67 (HY), and Arg76. Catalysis depends on Cys49, which acts as the Redox-active. FAD-binding residues include Val86, Asp284, and Ala302. Residues Asn306 and Lys362 each coordinate CoA. Position 426 (Tyr426) interacts with FAD. Residues Trp434 and Arg442 each coordinate CoA.

The protein belongs to the class-III pyridine nucleotide-disulfide oxidoreductase family. It depends on FAD as a cofactor.

The catalysed reaction is hydrogen sulfide + NADP(+) = sulfur + NADPH. It carries out the reaction hydrogen sulfide + NAD(+) = sulfur + NADH. Its function is as follows. Catalyzes the CoA-dependent reduction of elemental sulfur (S(0)) to produce hydrogen sulfide. This is NAD(P)H sulfur oxidoreductase (CoA-dependent) from Pyrococcus abyssi (strain GE5 / Orsay).